The primary structure comprises 293 residues: 4-hydroxy-tetrahydrodipicolinate synthase (293 aa).

T44 is a pyruvate binding site. Y132 functions as the Proton donor/acceptor in the catalytic mechanism. K160 serves as the catalytic Schiff-base intermediate with substrate. I204 provides a ligand contact to pyruvate.

It belongs to the DapA family. As to quaternary structure, homotetramer; dimer of dimers.

The protein resides in the cytoplasm. It catalyses the reaction L-aspartate 4-semialdehyde + pyruvate = (2S,4S)-4-hydroxy-2,3,4,5-tetrahydrodipicolinate + H2O + H(+). Its pathway is amino-acid biosynthesis; L-lysine biosynthesis via DAP pathway; (S)-tetrahydrodipicolinate from L-aspartate: step 3/4. Catalyzes the condensation of (S)-aspartate-beta-semialdehyde [(S)-ASA] and pyruvate to 4-hydroxy-tetrahydrodipicolinate (HTPA). This chain is 4-hydroxy-tetrahydrodipicolinate synthase, found in Hyphomonas neptunium (strain ATCC 15444).